The chain runs to 75 residues: Serine rich endogenous peptide 20 (75 aa).

Positions 1 to 25 are cleaved as a signal peptide; that stretch reads MYKLTLCILTLSFLLLSGLSNTVLA. Positions 52 to 66 match the SCOOP motif motif; the sequence is KIGASGSNSGRAPSC. A disordered region spans residues 54 to 75; that stretch reads GASGSNSGRAPSCNNSCKPNRP. Residues 56–58 carry the SxS motif essential for MIK2 binding motif; it reads SGS. Residues 56 to 75 show a composition bias toward polar residues; that stretch reads SGSNSGRAPSCNNSCKPNRP.

This sequence belongs to the serine rich endogenous peptide (SCOOP) phytocytokine family. In terms of assembly, interacts with MIK2 (via extracellular leucine-rich repeat domain); this interaction triggers the formation of complex between MIK2 and the BAK1/SERK3 and SERK4 coreceptors, and subsequent BAK1 activation by phosphorylation. Mostly expressed in roots.

The protein resides in the cell membrane. It localises to the secreted. The protein localises to the extracellular space. Its subcellular location is the apoplast. Brassicaceae-specific phytocytokine (plant endogenous peptide released into the apoplast) perceived by MIK2 in a BAK1/SERK3 and SERK4 coreceptors-dependent manner, that modulates various physiological and antimicrobial processes including growth prevention and reactive oxygen species (ROS) response regulation. Inhibits root growth. This is Serine rich endogenous peptide 20 from Arabidopsis thaliana (Mouse-ear cress).